The sequence spans 452 residues: Pup--protein ligase (452 aa).

Glutamate 9 lines the Mg(2+) pocket. An ATP-binding site is contributed by arginine 53. Tyrosine 55 lines the Mg(2+) pocket. Aspartate 57 serves as the catalytic Proton acceptor. Glutamate 63 lines the Mg(2+) pocket. Residues threonine 66 and tryptophan 419 each coordinate ATP.

Belongs to the Pup ligase/Pup deamidase family. Pup-conjugating enzyme subfamily.

It carries out the reaction ATP + [prokaryotic ubiquitin-like protein]-L-glutamate + [protein]-L-lysine = ADP + phosphate + N(6)-([prokaryotic ubiquitin-like protein]-gamma-L-glutamyl)-[protein]-L-lysine.. Its pathway is protein degradation; proteasomal Pup-dependent pathway. It functions in the pathway protein modification; protein pupylation. Functionally, catalyzes the covalent attachment of the prokaryotic ubiquitin-like protein modifier Pup to the proteasomal substrate proteins, thereby targeting them for proteasomal degradation. This tagging system is termed pupylation. The ligation reaction involves the side-chain carboxylate of the C-terminal glutamate of Pup and the side-chain amino group of a substrate lysine. In Rhodococcus jostii (strain RHA1), this protein is Pup--protein ligase.